The primary structure comprises 228 residues: 3-oxoadipate CoA-transferase subunit A (228 aa).

25–31 (GGFGTAG) is a CoA binding site.

The protein belongs to the 3-oxoacid CoA-transferase subunit A family. As to quaternary structure, heterodimer.

The enzyme catalyses 3-oxoadipate + succinyl-CoA = 3-oxoadipyl-CoA + succinate. It functions in the pathway aromatic compound metabolism; beta-ketoadipate pathway; acetyl-CoA and succinyl-CoA from 3-oxoadipate: step 1/2. The polypeptide is 3-oxoadipate CoA-transferase subunit A (pcaI) (Acinetobacter baylyi (strain ATCC 33305 / BD413 / ADP1)).